The sequence spans 365 residues: Ribosomal RNA large subunit methyltransferase M (365 aa).

Residues Ser-194, 227 to 230, Asp-246, Asp-266, and Asp-284 each bind S-adenosyl-L-methionine; that span reads CPGG. The active-site Proton acceptor is Lys-313.

The protein belongs to the class I-like SAM-binding methyltransferase superfamily. RNA methyltransferase RlmE family. RlmM subfamily. Monomer.

It localises to the cytoplasm. It catalyses the reaction cytidine(2498) in 23S rRNA + S-adenosyl-L-methionine = 2'-O-methylcytidine(2498) in 23S rRNA + S-adenosyl-L-homocysteine + H(+). Its function is as follows. Catalyzes the 2'-O-methylation at nucleotide C2498 in 23S rRNA. In Pasteurella multocida (strain Pm70), this protein is Ribosomal RNA large subunit methyltransferase M.